A 299-amino-acid chain; its full sequence is Ig alpha chain C region (299 aa).

Ig-like domains are found at residues 71-167 (PSLS…ATIS) and 174-276 (PQVH…KTID).

Ig alpha is the major immunoglobulin class in body secretions. It may serve both to defend against local infection and to prevent access of foreign antigens to the general immunologic system. The sequence is that of Ig alpha chain C region from Oryctolagus cuniculus (Rabbit).